A 252-amino-acid polypeptide reads, in one-letter code: Chitooligosaccharide deacetylase (252 aa).

Mg(2+) contacts are provided by histidine 61 and histidine 125.

This sequence belongs to the YdjC deacetylase family. ChbG subfamily. As to quaternary structure, homodimer. Mg(2+) is required as a cofactor.

The protein resides in the cytoplasm. It carries out the reaction N,N'-diacetylchitobiose + H2O = N-acetyl-beta-D-glucosaminyl-(1-&gt;4)-D-glucosamine + acetate. The catalysed reaction is diacetylchitobiose-6'-phosphate + H2O = N'-monoacetylchitobiose-6'-phosphate + acetate. It participates in glycan degradation; chitin degradation. Its function is as follows. Involved in the degradation of chitin. ChbG is essential for growth on the acetylated chitooligosaccharides chitobiose and chitotriose but is dispensable for growth on cellobiose and chitosan dimer, the deacetylated form of chitobiose. Deacetylation of chitobiose-6-P and chitotriose-6-P is necessary for both the activation of the chb promoter by the regulatory protein ChbR and the hydrolysis of phosphorylated beta-glucosides by the phospho-beta-glucosidase ChbF. Catalyzes the removal of only one acetyl group from chitobiose-6-P to yield monoacetylchitobiose-6-P, the inducer of ChbR and the substrate of ChbF. This chain is Chitooligosaccharide deacetylase, found in Salmonella dublin (strain CT_02021853).